The primary structure comprises 275 residues: Apoptosis inhibitor 1 (275 aa).

BIR repeat units follow at residues 24-91 (LIER…CVYA) and 126-193 (PSAR…CYFV). The Zn(2+) site is built by Cys163, Cys166, His183, and Cys190. The RING-type zinc finger occupies 227 to 263 (CKVCLERQRDAVLLPCRHFCVCMQCYFALDGKCPTCR).

Acts by blocking cellular apoptosis rather than by preventing viral stimulation of apoptosis. The chain is Apoptosis inhibitor 1 (IAP1) from Orgyia pseudotsugata (Douglas-fir tussock moth).